A 380-amino-acid polypeptide reads, in one-letter code: Chaperone protein DnaJ (380 aa).

The region spanning 5 to 69 is the J domain; sequence DYYEILGVSK…QKRAHYDQFG (65 aa). A CR-type zinc finger spans residues 135–217; the sequence is GKETDIEIPS…CGGTGRVKRR (83 aa). Zn(2+) contacts are provided by C148, C151, C165, C168, C191, C194, C205, and C208. CXXCXGXG motif repeat units lie at residues 148–155, 165–172, 191–198, and 205–212; these read CNTCHGTG, CPHCHGAG, CPYCGGTG, and CTTCGGTG.

Belongs to the DnaJ family. Homodimer. The cofactor is Zn(2+).

The protein resides in the cytoplasm. Participates actively in the response to hyperosmotic and heat shock by preventing the aggregation of stress-denatured proteins and by disaggregating proteins, also in an autonomous, DnaK-independent fashion. Unfolded proteins bind initially to DnaJ; upon interaction with the DnaJ-bound protein, DnaK hydrolyzes its bound ATP, resulting in the formation of a stable complex. GrpE releases ADP from DnaK; ATP binding to DnaK triggers the release of the substrate protein, thus completing the reaction cycle. Several rounds of ATP-dependent interactions between DnaJ, DnaK and GrpE are required for fully efficient folding. Also involved, together with DnaK and GrpE, in the DNA replication of plasmids through activation of initiation proteins. This chain is Chaperone protein DnaJ, found in Geobacillus stearothermophilus (Bacillus stearothermophilus).